Consider the following 24-residue polypeptide: Skin secreted peptide 1 (24 aa).

Expressed by the skin glands.

The protein resides in the secreted. This is Skin secreted peptide 1 from Ascaphus truei (Coastal tailed frog).